Reading from the N-terminus, the 141-residue chain is Large ribosomal subunit protein uL11c (141 aa).

It belongs to the universal ribosomal protein uL11 family. Part of the ribosomal stalk of the 50S ribosomal subunit. Interacts with L10 and the large rRNA to form the base of the stalk. L10 forms an elongated spine to which L12 dimers bind in a sequential fashion forming a multimeric L10(L12)X complex.

The protein resides in the plastid. It is found in the chloroplast. Forms part of the ribosomal stalk which helps the ribosome interact with GTP-bound translation factors. In Cyanidium caldarium (Red alga), this protein is Large ribosomal subunit protein uL11c.